The primary structure comprises 229 residues: Protein 33K (229 aa).

Residues 1–157 form a disordered region; the sequence is MAPKKKLQLP…GALRLAPNEP (157 aa). Residues 14–54 show a composition bias toward acidic residues; it reads TDEEEYWDSQAEEVLDEEEEDMMEDWESLDEEASEVEEVSD. Low complexity-rich tracts occupy residues 55 to 64, 71 to 82, and 100 to 122; these read ETPSPSVAFP, SATGSSMATTSA, and TTGT…AAAT. Residues 172–199 are necessary for nuclear subcellular location; that stretch reads YAIFQQSRGQEQELKIKNRSLRSLTRSC. The tract at residues 178-198 is RS-repeat; required for splicing enhancer activity; that stretch reads SRGQEQELKIKNRSLRSLTRS.

This sequence belongs to the adenoviridae splicing factor family. In terms of assembly, homooligomer. Interacts with DBP; this interaction occurs at a unique vertex during genome packaging. Interacts with IVa2; this interaction occurs at a unique vertex during genome packaging and seems to potentiate IVa2 and 33K oligomerization. Phosphorylated in vitro by human PKA and PRKDC. PRKDC inhibits, whereas PKA activates the splicing factor.

It localises to the host nucleus. In terms of biological role, promotes alternative splicing of late transcripts by promoting splicing at weak 3' splice sites. Required for the temporal activation of major late pre-mRNA splicing at late times of infection. Induces the splicing and expression of the late capsid vertex protein. Probably functions as the small terminase that is part of the molecular motor that translocates genomic DNA in empty capsid during DNA packaging. This motor is located at a unique vertex and comprises at least the IVa2 ATPase, the small terminase 33K and probably a portal. Forms a ring-like structure of about 17 nm in which genomic DNA is translocated into the capsid. Stimulates IVa2 ATPase activity in the presence of the viral genome. Once the DNA is packaged, the terminase detaches: the 33K protein is present in the empty particles, but not in the mature virions. Also involved in virion assembly. This Homo sapiens (Human) protein is Protein 33K.